The chain runs to 233 residues: Large ribosomal subunit protein uL1 (233 aa).

Belongs to the universal ribosomal protein uL1 family. Part of the 50S ribosomal subunit.

Its function is as follows. Binds directly to 23S rRNA. The L1 stalk is quite mobile in the ribosome, and is involved in E site tRNA release. In terms of biological role, protein L1 is also a translational repressor protein, it controls the translation of the L11 operon by binding to its mRNA. The sequence is that of Large ribosomal subunit protein uL1 from Shewanella piezotolerans (strain WP3 / JCM 13877).